Consider the following 250-residue polypeptide: Acidic leucine-rich nuclear phosphoprotein 32 family member E (250 aa).

A Phosphoserine modification is found at Ser-8. LRR repeat units lie at residues 43 to 64, 65 to 87, and 89 to 110; these read ELEF…PSLP, KLRK…AEKC, and NLTY…EALQ. In terms of domain architecture, LRRCT spans 123–161; it reads CEITTLEDYRESIFELLPQVTYLDGFDAEDNEAPDSEAD. Composition is skewed to acidic residues over residues 149–171, 178–191, and 205–227; these read DAED…DGDE, EYEE…EGSE, and IQDE…EEEA. Residues 149-250 form a disordered region; that stretch reads DAEDNEAPDS…EGEDDDEDDD (102 aa). The interval 194-247 is ZID domain; it reads EVGLSYLMKEDIQDEEDDDDYVEEEEEEGGEEEADVRGEKRKREAEDEGEDDDE. A compositionally biased stretch (basic and acidic residues) spans 228–238; sequence DVRGEKRKREA. Over residues 239–250 the composition is skewed to acidic residues; that stretch reads EDEGEDDDEDDD.

The protein belongs to the ANP32 family. In terms of assembly, component of a SWR1-like complex. Interacts with H2A.Z/H2AZ1. Post-translationally, phosphorylated. The phosphorylation is nuclear localization signal (NLS)-dependent.

It localises to the cytoplasm. It is found in the nucleus. Histone chaperone that specifically mediates the genome-wide removal of histone H2A.Z/H2AZ1 from the nucleosome: removes H2A.Z/H2AZ1 from its normal sites of deposition, especially from enhancer and insulator regions. Not involved in deposition of H2A.Z/H2AZ1 in the nucleosome. May stabilize the evicted H2A.Z/H2AZ1-H2B dimer, thus shifting the equilibrium towards dissociation and the off-chromatin state. Inhibits activity of protein phosphatase 2A (PP2A). Does not inhibit protein phosphatase 1. May play a role in cerebellar development and synaptogenesis. This Danio rerio (Zebrafish) protein is Acidic leucine-rich nuclear phosphoprotein 32 family member E (anp32e).